The following is a 178-amino-acid chain: Small ribosomal subunit protein uS5 (178 aa).

The 64-residue stretch at 15-78 (FEEKIIEIRR…ADAKKNVIEV (64 aa)) folds into the S5 DRBM domain.

It belongs to the universal ribosomal protein uS5 family. As to quaternary structure, part of the 30S ribosomal subunit. Contacts proteins S4 and S8.

In terms of biological role, with S4 and S12 plays an important role in translational accuracy. Its function is as follows. Located at the back of the 30S subunit body where it stabilizes the conformation of the head with respect to the body. The sequence is that of Small ribosomal subunit protein uS5 from Thermotoga neapolitana (strain ATCC 49049 / DSM 4359 / NBRC 107923 / NS-E).